We begin with the raw amino-acid sequence, 73 residues long: Omega-hexatoxin-Ar1b (73 aa).

Residues Met1 to Ala22 form the signal peptide. Positions Gly23–Arg37 are excised as a propeptide. Cystine bridges form between Cys40-Cys54, Cys47-Cys58, and Cys53-Cys72.

It belongs to the neurotoxin 08 (Shiva) family. 01 (omega toxin) subfamily. In terms of tissue distribution, expressed by the venom gland.

The protein resides in the secreted. In terms of biological role, insecticidal toxin that reversibly and voltage-independently blocks both mid-low- (M-LVA) and high-voltage-activated (HVA) calcium channels (Cav) in cockroach DUM neurons. Also causes a modest block of insect sodium channel currents (Nav). Induces potent excitatory symptoms, followed by flaccid paralysis leading to death in house crickets. In Atrax robustus (Sydney funnel-web spider), this protein is Omega-hexatoxin-Ar1b.